A 374-amino-acid polypeptide reads, in one-letter code: Carnitine monooxygenase oxygenase subunit (374 aa).

One can recognise a Rieske domain in the interval 47-155; it reads WICVAHSSEL…LEEYAGFVFI (109 aa). 4 residues coordinate [2Fe-2S] cluster: cysteine 89, histidine 91, cysteine 109, and histidine 112. Fe cation is bound by residues histidine 211, histidine 216, and aspartate 325.

Belongs to the bacterial ring-hydroxylating dioxygenase alpha subunit family. CntA subfamily. As to quaternary structure, composed of an oxygenase subunit and a reductase subunit. Requires [2Fe-2S] cluster as cofactor. The cofactor is Fe cation.

It carries out the reaction (R)-carnitine + NADH + O2 + H(+) = (3R)-3-hydroxy-4-oxobutanoate + trimethylamine + NAD(+) + H2O. The catalysed reaction is (R)-carnitine + NADPH + O2 + H(+) = (3R)-3-hydroxy-4-oxobutanoate + trimethylamine + NADP(+) + H2O. Its pathway is amine and polyamine metabolism; carnitine metabolism. Converts carnitine to trimethylamine and malic semialdehyde. The polypeptide is Carnitine monooxygenase oxygenase subunit (yeaW) (Escherichia coli O157:H7).